Reading from the N-terminus, the 467-residue chain is UDP-N-acetylmuramate--L-alanine ligase (467 aa).

Gly-114–Thr-120 is a binding site for ATP.

Belongs to the MurCDEF family.

The protein resides in the cytoplasm. The enzyme catalyses UDP-N-acetyl-alpha-D-muramate + L-alanine + ATP = UDP-N-acetyl-alpha-D-muramoyl-L-alanine + ADP + phosphate + H(+). It participates in cell wall biogenesis; peptidoglycan biosynthesis. In terms of biological role, cell wall formation. This Rhodopseudomonas palustris (strain TIE-1) protein is UDP-N-acetylmuramate--L-alanine ligase.